Consider the following 430-residue polypeptide: Enolase (430 aa).

Gln167 serves as a coordination point for (2R)-2-phosphoglycerate. Catalysis depends on Glu209, which acts as the Proton donor. Mg(2+) contacts are provided by Asp245, Glu286, and Asp313. (2R)-2-phosphoglycerate contacts are provided by Lys338, Arg367, Ser368, and Lys389. The active-site Proton acceptor is Lys338.

The protein belongs to the enolase family. Mg(2+) serves as cofactor.

The protein resides in the cytoplasm. It is found in the secreted. Its subcellular location is the cell surface. It catalyses the reaction (2R)-2-phosphoglycerate = phosphoenolpyruvate + H2O. The protein operates within carbohydrate degradation; glycolysis; pyruvate from D-glyceraldehyde 3-phosphate: step 4/5. In terms of biological role, catalyzes the reversible conversion of 2-phosphoglycerate (2-PG) into phosphoenolpyruvate (PEP). It is essential for the degradation of carbohydrates via glycolysis. This is Enolase from Synechococcus sp. (strain CC9902).